The following is a 187-amino-acid chain: Probable cobalt-precorrin-6B C(15)-methyltransferase (decarboxylating) (187 aa).

S-adenosyl-L-methionine-binding positions include T15, G39 to G43, E60, and A89.

This sequence belongs to the methyltransferase superfamily. Archaeal-type CbiT family.

It carries out the reaction Co-precorrin-6B + S-adenosyl-L-methionine = Co-precorrin-7 + S-adenosyl-L-homocysteine + CO2. The protein operates within cofactor biosynthesis; adenosylcobalamin biosynthesis; cob(II)yrinate a,c-diamide from sirohydrochlorin (anaerobic route): step 8/10. In terms of biological role, catalyzes the methylation of C-15 in cobalt-precorrin-6B followed by the decarboxylation of C-12 to form cobalt-precorrin-7. This is Probable cobalt-precorrin-6B C(15)-methyltransferase (decarboxylating) from Halobacterium salinarum (strain ATCC 700922 / JCM 11081 / NRC-1) (Halobacterium halobium).